A 311-amino-acid chain; its full sequence is Coproporphyrin III ferrochelatase 1 (311 aa).

Residues Y12, R29, 45–46, S53, and Y124 contribute to the Fe-coproporphyrin III site; that span reads RY. The Fe(2+) site is built by H182 and E263.

It belongs to the ferrochelatase family.

It localises to the cytoplasm. The catalysed reaction is Fe-coproporphyrin III + 2 H(+) = coproporphyrin III + Fe(2+). It functions in the pathway porphyrin-containing compound metabolism; protoheme biosynthesis. Functionally, involved in coproporphyrin-dependent heme b biosynthesis. Catalyzes the insertion of ferrous iron into coproporphyrin III to form Fe-coproporphyrin III. This Bacillus cereus (strain ATCC 14579 / DSM 31 / CCUG 7414 / JCM 2152 / NBRC 15305 / NCIMB 9373 / NCTC 2599 / NRRL B-3711) protein is Coproporphyrin III ferrochelatase 1.